A 220-amino-acid polypeptide reads, in one-letter code: MNLYNLVRDALRPSYATVSPSVDEPTVDNNFVALSCYATLSVLLYYLQRVKQPYLSMLFHILFCLSQVCMVIWLIFSANFYVSLFAQCMLVVCALGCFLERTILSIKLRSMAPFMSMADNFAIIKTTCNNYVFPVERSSDNLVVLTTSRGIYSNGVFMKGAITVSDNALVVSLFKSHSLLLDRVEHGYDYTVFIYINSVILQNIKPTVSVVNTEFTDVEL.

Positions Thr-17–Ser-116 constitute a CoV 3a-like viroporin TM domain. The next 3 membrane-spanning stretches (helical) occupy residues Val-27–Leu-47, Ser-56–Phe-76, and Phe-80–Glu-100. The region spanning Asn-120–Ile-200 is the CoV 3a-like viroporin CD domain.

Its subcellular location is the host membrane. This Bat coronavirus HKU9 (BtCoV) protein is Non-structural protein 3.